The chain runs to 972 residues: FHF complex subunit HOOK-interacting protein 1B (972 aa).

Disordered stretches follow at residues 465-548 (APSP…GELE) and 573-644 (SAPY…SWPE). Serine 467 carries the phosphoserine modification. The segment covering 478–501 (RGPGSPSVDSSSVTTVPRPSTPSR) has biased composition (low complexity). Phosphoserine is present on residues serine 510, serine 523, serine 529, and serine 533. Residues 523 to 535 (SPGLSASPASSPG) show a composition bias toward low complexity. A phosphoserine mark is found at serine 859 and serine 897.

This sequence belongs to the FHIP family. As to quaternary structure, component of the FTS/Hook/FHIP complex (FHF complex), composed of AKTIP/FTS, FHIP1B, and one or more members of the Hook family of proteins HOOK1, HOOK2, and HOOK3. The FHF complex associates with the homotypic vesicular sorting complex (the HOPS complex).

Its function is as follows. Component of the FTS/Hook/FHIP complex (FHF complex). The FHF complex may function to promote vesicle trafficking and/or fusion via the homotypic vesicular protein sorting complex (the HOPS complex). FHF complex promotes the distribution of AP-4 complex to the perinuclear area of the cell. The sequence is that of FHF complex subunit HOOK-interacting protein 1B from Homo sapiens (Human).